The primary structure comprises 85 residues: Large ribosomal subunit protein bL27 (85 aa).

The segment at 1–22 is disordered; it reads MAHKKGASSTRNGRDSNAQRLG. The span at 7 to 19 shows a compositional bias: polar residues; it reads ASSTRNGRDSNAQ.

It belongs to the bacterial ribosomal protein bL27 family.

The chain is Large ribosomal subunit protein bL27 (rpmA) from Streptomyces griseus.